A 101-amino-acid chain; its full sequence is Large ribosomal subunit protein eL31 (101 aa).

This sequence belongs to the eukaryotic ribosomal protein eL31 family.

The protein is Large ribosomal subunit protein eL31 of Ignicoccus hospitalis (strain KIN4/I / DSM 18386 / JCM 14125).